The following is a 322-amino-acid chain: MSAVPHDSATHPPVVCLLGPTASGKTAAALALAADAPVEIISLDSALVYREMDIGTAKPTREELAAAPHHLIDIIDPADSYSAAQFVTDAERLIAQIRARGHVPLIVGGTMLYYKALTQGLNDLPQADAALRAELDQLAAERGWPALHAMLAEVDPVTAARLAPNDAQRIQRALEIHRLSGQPMSALLARQAEGRTFAGAADQRFRVIALEPSDRLALHARIAQRYDAMLANGFIEEVERLRRRGDLHPGLPSIRCVGYRQVWEYLDGDADFATMRERGIAATRQLCKRQLTWLRSTPERLVVDCLAPGYVDQVRRLADFGH.

Residue 19–26 (GPTASGKT) coordinates ATP. 21–26 (TASGKT) provides a ligand contact to substrate. Interaction with substrate tRNA stretches follow at residues 44 to 47 (DSAL), 168 to 172 (QRIQR), and 255 to 260 (RCVGYR).

Belongs to the IPP transferase family. Monomer. Mg(2+) serves as cofactor.

It carries out the reaction adenosine(37) in tRNA + dimethylallyl diphosphate = N(6)-dimethylallyladenosine(37) in tRNA + diphosphate. Its function is as follows. Catalyzes the transfer of a dimethylallyl group onto the adenine at position 37 in tRNAs that read codons beginning with uridine, leading to the formation of N6-(dimethylallyl)adenosine (i(6)A). The polypeptide is tRNA dimethylallyltransferase (Cupriavidus necator (strain ATCC 17699 / DSM 428 / KCTC 22496 / NCIMB 10442 / H16 / Stanier 337) (Ralstonia eutropha)).